The primary structure comprises 227 residues: ATP-dependent Clp protease proteolytic subunit (227 aa).

The active-site Nucleophile is Ser120. His145 is an active-site residue.

Belongs to the peptidase S14 family. Fourteen ClpP subunits assemble into 2 heptameric rings which stack back to back to give a disk-like structure with a central cavity, resembling the structure of eukaryotic proteasomes.

Its subcellular location is the cytoplasm. The enzyme catalyses Hydrolysis of proteins to small peptides in the presence of ATP and magnesium. alpha-casein is the usual test substrate. In the absence of ATP, only oligopeptides shorter than five residues are hydrolyzed (such as succinyl-Leu-Tyr-|-NHMec, and Leu-Tyr-Leu-|-Tyr-Trp, in which cleavage of the -Tyr-|-Leu- and -Tyr-|-Trp bonds also occurs).. Its function is as follows. Cleaves peptides in various proteins in a process that requires ATP hydrolysis. Has a chymotrypsin-like activity. Plays a major role in the degradation of misfolded proteins. The polypeptide is ATP-dependent Clp protease proteolytic subunit (Rickettsia bellii (strain RML369-C)).